We begin with the raw amino-acid sequence, 160 residues long: Lymphocyte antigen 86 (160 aa).

Positions Met-1–Thr-20 are cleaved as a signal peptide. 3 disulfides stabilise this stretch: Cys-28/Cys-53, Cys-40/Cys-149, and Cys-97/Cys-107.

As to quaternary structure, M-shaped tetramer of two CD180-LY86 heterodimers. In terms of tissue distribution, detected in the macrophage-like 10.4 cells.

The protein resides in the secreted. The protein localises to the extracellular space. May cooperate with CD180 and TLR4 to mediate the innate immune response to bacterial lipopolysaccharide (LPS) and cytokine production. Important for efficient CD180 cell surface expression. The sequence is that of Lymphocyte antigen 86 (LY86) from Gallus gallus (Chicken).